Reading from the N-terminus, the 124-residue chain is Small ribosomal subunit protein uS12 (124 aa).

Asp89 bears the 3-methylthioaspartic acid mark.

This sequence belongs to the universal ribosomal protein uS12 family. In terms of assembly, part of the 30S ribosomal subunit. Contacts proteins S8 and S17. May interact with IF1 in the 30S initiation complex.

With S4 and S5 plays an important role in translational accuracy. Functionally, interacts with and stabilizes bases of the 16S rRNA that are involved in tRNA selection in the A site and with the mRNA backbone. Located at the interface of the 30S and 50S subunits, it traverses the body of the 30S subunit contacting proteins on the other side and probably holding the rRNA structure together. The combined cluster of proteins S8, S12 and S17 appears to hold together the shoulder and platform of the 30S subunit. This chain is Small ribosomal subunit protein uS12, found in Photobacterium profundum (strain SS9).